The chain runs to 469 residues: 3-isopropylmalate dehydratase large subunit (469 aa).

[4Fe-4S] cluster-binding residues include cysteine 349, cysteine 409, and cysteine 412.

It belongs to the aconitase/IPM isomerase family. LeuC type 1 subfamily. As to quaternary structure, heterodimer of LeuC and LeuD. The cofactor is [4Fe-4S] cluster.

The enzyme catalyses (2R,3S)-3-isopropylmalate = (2S)-2-isopropylmalate. Its pathway is amino-acid biosynthesis; L-leucine biosynthesis; L-leucine from 3-methyl-2-oxobutanoate: step 2/4. Catalyzes the isomerization between 2-isopropylmalate and 3-isopropylmalate, via the formation of 2-isopropylmaleate. This Methylorubrum populi (strain ATCC BAA-705 / NCIMB 13946 / BJ001) (Methylobacterium populi) protein is 3-isopropylmalate dehydratase large subunit.